A 545-amino-acid polypeptide reads, in one-letter code: ATP synthase subunit alpha (545 aa).

Residue 172–179 coordinates ATP; that stretch reads GDRKTGKT.

The protein belongs to the ATPase alpha/beta chains family. F-type ATPases have 2 components, CF(1) - the catalytic core - and CF(0) - the membrane proton channel. CF(1) has five subunits: alpha(3), beta(3), gamma(1), delta(1), epsilon(1). CF(0) has three main subunits: a(1), b(2) and c(9-12). The alpha and beta chains form an alternating ring which encloses part of the gamma chain. CF(1) is attached to CF(0) by a central stalk formed by the gamma and epsilon chains, while a peripheral stalk is formed by the delta and b chains.

It localises to the cell membrane. It carries out the reaction ATP + H2O + 4 H(+)(in) = ADP + phosphate + 5 H(+)(out). Produces ATP from ADP in the presence of a proton gradient across the membrane. The alpha chain is a regulatory subunit. This Nocardia farcinica (strain IFM 10152) protein is ATP synthase subunit alpha.